The following is an 825-amino-acid chain: Phenylalanine--tRNA ligase beta subunit (825 aa).

The region spanning 39-154 (RSWAEGVVLG…KAHPLGSDAR (116 aa)) is the tRNA-binding domain. Residues 411-506 (PLERTLKLRL…RLYGYDRFSE (96 aa)) form the B5 domain. Mg(2+)-binding residues include D484, D490, E493, and E494. An FDX-ACB domain is found at 731–824 (SPFPASDRDI…LEKHFPVTLR (94 aa)).

Belongs to the phenylalanyl-tRNA synthetase beta subunit family. Type 1 subfamily. Tetramer of two alpha and two beta subunits. It depends on Mg(2+) as a cofactor.

Its subcellular location is the cytoplasm. It catalyses the reaction tRNA(Phe) + L-phenylalanine + ATP = L-phenylalanyl-tRNA(Phe) + AMP + diphosphate + H(+). This Synechococcus sp. (strain JA-3-3Ab) (Cyanobacteria bacterium Yellowstone A-Prime) protein is Phenylalanine--tRNA ligase beta subunit.